The chain runs to 317 residues: HTH-type transcriptional regulator MetR (317 aa).

Residues 1 to 59 form the HTH lysR-type domain; the sequence is MIEVKHLKTLQALRNCGSLAAAAATLHQTQSALSHQFSDLEQRLGFRLFVRKSQPLRFT. The segment at residues 19 to 38 is a DNA-binding region (H-T-H motif); sequence LAAAAATLHQTQSALSHQFS.

It belongs to the LysR transcriptional regulatory family.

Its subcellular location is the cytoplasm. Its function is as follows. Control of the last step in methionine biosynthesis; MetR is a positive activator of the metA, metE and metH genes. It is also a negative regulator of its own expression. This is HTH-type transcriptional regulator MetR (metR) from Escherichia coli O157:H7.